Here is a 553-residue protein sequence, read N- to C-terminus: Formate--tetrahydrofolate ligase (553 aa).

62 to 69 (TPAGEGKS) contacts ATP.

Belongs to the formate--tetrahydrofolate ligase family.

The catalysed reaction is (6S)-5,6,7,8-tetrahydrofolate + formate + ATP = (6R)-10-formyltetrahydrofolate + ADP + phosphate. It functions in the pathway one-carbon metabolism; tetrahydrofolate interconversion. The sequence is that of Formate--tetrahydrofolate ligase from Limosilactobacillus reuteri subsp. reuteri (strain JCM 1112) (Lactobacillus reuteri).